We begin with the raw amino-acid sequence, 369 residues long: DNA replication and repair protein RecF (369 aa).

Position 30-37 (30-37) interacts with ATP; it reads GENGQGKT.

Belongs to the RecF family.

The protein resides in the cytoplasm. Functionally, the RecF protein is involved in DNA metabolism; it is required for DNA replication and normal SOS inducibility. RecF binds preferentially to single-stranded, linear DNA. It also seems to bind ATP. The sequence is that of DNA replication and repair protein RecF from Anaeromyxobacter sp. (strain Fw109-5).